Reading from the N-terminus, the 134-residue chain is ATP synthase epsilon chain (134 aa).

The protein belongs to the ATPase epsilon chain family. In terms of assembly, F-type ATPases have 2 components, CF(1) - the catalytic core - and CF(0) - the membrane proton channel. CF(1) has five subunits: alpha(3), beta(3), gamma(1), delta(1), epsilon(1). CF(0) has three main subunits: a, b and c.

It localises to the cell membrane. Functionally, produces ATP from ADP in the presence of a proton gradient across the membrane. The protein is ATP synthase epsilon chain of Listeria welshimeri serovar 6b (strain ATCC 35897 / DSM 20650 / CCUG 15529 / CIP 8149 / NCTC 11857 / SLCC 5334 / V8).